Consider the following 206-residue polypeptide: Outer-membrane lipoprotein carrier protein (206 aa).

An N-terminal signal peptide occupies residues 1–23 (MKPLFPMLTAAAIAAGLAAPAQA).

Belongs to the LolA family. As to quaternary structure, monomer.

Its subcellular location is the periplasm. Functionally, participates in the translocation of lipoproteins from the inner membrane to the outer membrane. Only forms a complex with a lipoprotein if the residue after the N-terminal Cys is not an aspartate (The Asp acts as a targeting signal to indicate that the lipoprotein should stay in the inner membrane). The protein is Outer-membrane lipoprotein carrier protein of Chromobacterium violaceum (strain ATCC 12472 / DSM 30191 / JCM 1249 / CCUG 213 / NBRC 12614 / NCIMB 9131 / NCTC 9757 / MK).